Consider the following 728-residue polypeptide: Peroxisome biogenesis protein 5 (728 aa).

The segment at 1–58 is disordered; the sequence is MAMRDLVNGGAACAVPGSSSSSNPLGALTNALLGSSSKTQERLKEIPNANRSGPRPQF. The segment at 11–97 is amphipathic helix 1 (AH1); that stretch reads AACAVPGSSS…FRGFRSVDQN (87 aa). Residue Cys13 forms a Glycyl cysteine thioester (Cys-Gly) (interchain with G-Cter in ubiquitin) linkage. 3 tandem repeats follow at residues 240 to 244, 257 to 261, and 270 to 274. Short sequence motifs (wxxxF/Y motif) lie at residues 240–244, 257–261, and 270–274; these read WAAEF, WVQSF, and WATEF. Residues 288–311 form an amphipathic helix 3 (AH3) region; the sequence is SMDMQNIAAMEQTRKLAHTLSQDG. 6 consecutive repeat copies span residues 348–352, 362–366, 378–382, 396–400, 408–412, and 425–429. Short sequence motifs (wxxxF/Y motif) lie at residues 348–352, 362–366, 378–382, 396–400, 408–412, and 425–429; these read WATEY, WADQF, WADEF, WVNEF, WIDEF, and WANAY. The interval 392–417 is amphipathic helix 4 (AH4); sequence AEDQWVNEFSKLNVDDWIDEFAEGPV. TPR repeat units lie at residues 491-524, 590-623, 625-657, and 658-691; these read AEGW…DPTN, ADVH…KPND, SLWN…KPNY, and VRAW…NPKA.

The protein belongs to the peroxisomal targeting signal receptor family. Interacts (via WxxxF/Y and LVxEF motifs) with PEX14; promoting translocation through the PEX13-PEX14 docking complex. Interacts with PEX7, promoting peroxisomal import of proteins containing a C-terminal PTS2-type peroxisomal targeting signal. Interacts with LACS7. Post-translationally, monoubiquitinated at Cys-13 by PEX2 during PEX5 passage through the retrotranslocation channel. Cys-13 monoubiquitination acts as a recognition signal for the PEX1-PEX6 complex and is required for PEX5 extraction and export from peroxisomes. When PEX5 recycling is compromised, polyubiquitinated by PEX10 during its passage through the retrotranslocation channel, leading to its degradation. In terms of tissue distribution, expressed in flowers, siliques, leaves and roots.

It localises to the cytoplasm. The protein localises to the cytosol. It is found in the peroxisome matrix. Functionally, receptor that mediates peroxisomal import of proteins containing a C-terminal PTS1-type tripeptide peroxisomal targeting signal (SKL-type). Binds to cargo proteins containing a PTS1 peroxisomal targeting signal in the cytosol, and translocates them into the peroxisome matrix by passing through the PEX13-PEX14 docking complex along with cargo proteins. PEX5 receptor is then retrotranslocated into the cytosol, leading to release of bound cargo in the peroxisome matrix, and reset for a subsequent peroxisome import cycle. In addition to promoting peroxisomal translocation of proteins containing a PTS1 peroxisomal targeting signal, mediates peroxisomal import of proteins containing a C-terminal PTS2-type peroxisomal targeting signal via its interaction with PEX7. Interaction with PEX7 only takes place when PEX7 is associated with cargo proteins containing a PTS2 peroxisomal targeting signal. PEX7 along with PTS2-containing cargo proteins are then translocated through the PEX13-PEX14 docking complex together with PEX5. Necessary for the developmental elimination of obsolete peroxisome matrix proteins. The protein is Peroxisome biogenesis protein 5 (PEX5) of Arabidopsis thaliana (Mouse-ear cress).